A 252-amino-acid chain; its full sequence is Trans-aconitate 2-methyltransferase (252 aa).

It belongs to the methyltransferase superfamily. Tam family.

Its subcellular location is the cytoplasm. The enzyme catalyses trans-aconitate + S-adenosyl-L-methionine = (E)-3-(methoxycarbonyl)pent-2-enedioate + S-adenosyl-L-homocysteine. In terms of biological role, catalyzes the S-adenosylmethionine monomethyl esterification of trans-aconitate. The chain is Trans-aconitate 2-methyltransferase from Shigella flexneri serotype 5b (strain 8401).